Reading from the N-terminus, the 436-residue chain is 3-ketoacyl-CoA thiolase (436 aa).

The active-site Acyl-thioester intermediate is cysteine 99. Catalysis depends on proton acceptor residues histidine 392 and cysteine 422.

The protein belongs to the thiolase-like superfamily. Thiolase family. As to quaternary structure, heterotetramer of two alpha chains (FadJ) and two beta chains (FadI).

The protein localises to the cytoplasm. It carries out the reaction an acyl-CoA + acetyl-CoA = a 3-oxoacyl-CoA + CoA. The protein operates within lipid metabolism; fatty acid beta-oxidation. Catalyzes the final step of fatty acid oxidation in which acetyl-CoA is released and the CoA ester of a fatty acid two carbons shorter is formed. In Shewanella halifaxensis (strain HAW-EB4), this protein is 3-ketoacyl-CoA thiolase.